Reading from the N-terminus, the 119-residue chain is Beta-2-microglobulin (119 aa).

The signal sequence occupies residues 1 to 20 (MARSVVVALLVLLSLSGLEA). The Ig-like C1-type domain maps to 25 to 114 (PKIQVYSRHP…VTFPTPKTVK (90 aa)). A disulfide bond links Cys45 and Cys100.

It belongs to the beta-2-microglobulin family. In terms of assembly, heterodimer of an alpha chain and a beta chain. Beta-2-microglobulin is the beta-chain of major histocompatibility complex class I molecules.

It localises to the secreted. Component of the class I major histocompatibility complex (MHC). Involved in the presentation of peptide antigens to the immune system. This chain is Beta-2-microglobulin (B2M), found in Lagothrix lagotricha (Brown woolly monkey).